The sequence spans 445 residues: Phospho-alpha-glucosidase PagL (445 aa).

Residue 4–71 (YSICIVGGGS…ELEEVIWTTD (68 aa)) coordinates NAD(+). Arginine 94 and asparagine 148 together coordinate substrate. Cysteine 171 provides a ligand contact to Mn(2+). Aspartate 172 functions as the Proton donor in the catalytic mechanism. Mn(2+) is bound at residue histidine 201. The active-site Proton acceptor is the tyrosine 264. Residue arginine 284 coordinates substrate.

It belongs to the glycosyl hydrolase 4 family. As to quaternary structure, homotetramer. NAD(+) serves as cofactor. Mn(2+) is required as a cofactor.

Functionally, phospho-alpha-glucosidase that catalyzes the hydrolysis of p-nitrophenyl-alpha-D-glucopyranoside 6-phosphate, but is not able to cleave 'natural' phospho-alpha-glucosides produced via the phosphoenolpyruvate-dependent sugar phosphotransferase system (PEP-PTS). This is Phospho-alpha-glucosidase PagL (pagL) from Clostridium acetobutylicum (strain ATCC 824 / DSM 792 / JCM 1419 / IAM 19013 / LMG 5710 / NBRC 13948 / NRRL B-527 / VKM B-1787 / 2291 / W).